Consider the following 144-residue polypeptide: Maximins 6/Hv (144 aa).

Positions 1-18 (MNFKYIVAVSFLIASGYA) are cleaved as a signal peptide. The propeptide occupies 19-43 (RSEENDVQSLSQREVLEEETLREIR). Position 70 is an asparagine amide (Asn-70). Residues 74–123 (TAKGHEVMKRLEAVMRDLDSLDHPEEASERETRGFNQEEIANLFTKKEKR) constitute a propeptide that is removed on maturation. Ile-143 bears the Isoleucine amide mark.

This sequence belongs to the bombinin family. In terms of tissue distribution, expressed by the skin glands.

The protein resides in the secreted. In terms of biological role, shows antimicrobial activity against bacteria and against the fungus C.albicans. It has little hemolytic activity. Its function is as follows. Shows antimicrobial activity against bacteria and against the fungus C.albicans. Shows strong hemolytic activity. This Bombina maxima (Giant fire-bellied toad) protein is Maximins 6/Hv.